The chain runs to 177 residues: Thymidine kinase (177 aa).

11–18 (GPMFSGKS) is an ATP binding site. The Proton acceptor role is filled by Glu-83. Phe-113 is a substrate binding site. Residues Cys-138 and Cys-141 each contribute to the Zn(2+) site. 157-161 (IEIIG) contacts substrate. Positions 170 and 173 each coordinate Zn(2+).

It belongs to the thymidine kinase family. In terms of assembly, homotetramer. Two molecules of substrate bind to each enzyme tetramer.

It carries out the reaction thymidine + ATP = dTMP + ADP + H(+). Functionally, phosphorylates thymidine and thymidine analogs, such as azidothymidine (AZT). Part of the salvage pathway for pyrimidine deoxyribonucleotide synthesis. In Variola virus, this protein is Thymidine kinase (OPG101).